A 295-amino-acid chain; its full sequence is Nucleotide-binding protein RD1_1380 (295 aa).

Residue 16-23 (GPSGAGRS) participates in ATP binding. 63 to 66 (DPRN) contacts GTP.

This sequence belongs to the RapZ-like family.

Its function is as follows. Displays ATPase and GTPase activities. The polypeptide is Nucleotide-binding protein RD1_1380 (Roseobacter denitrificans (strain ATCC 33942 / OCh 114) (Erythrobacter sp. (strain OCh 114))).